The primary structure comprises 412 residues: 2,3-bisphosphoglycerate-independent phosphoglycerate mutase (412 aa).

The protein belongs to the BPG-independent phosphoglycerate mutase family. A-PGAM subfamily.

It carries out the reaction (2R)-2-phosphoglycerate = (2R)-3-phosphoglycerate. It participates in carbohydrate degradation; glycolysis; pyruvate from D-glyceraldehyde 3-phosphate: step 3/5. In terms of biological role, catalyzes the interconversion of 2-phosphoglycerate and 3-phosphoglycerate. The sequence is that of 2,3-bisphosphoglycerate-independent phosphoglycerate mutase (apgM) from Pyrococcus horikoshii (strain ATCC 700860 / DSM 12428 / JCM 9974 / NBRC 100139 / OT-3).